Here is a 665-residue protein sequence, read N- to C-terminus: Phosphatidylinositol-3-phosphate phosphatase MTMR1 (665 aa).

Met-1 carries the post-translational modification N-acetylmethionine. Over residues 1–11 the composition is skewed to low complexity; sequence MDRPAAAAAAG. A disordered region spans residues 1–51; it reads MDRPAAAAAAGCEGGGGPNPGPAGGRRPPRAAGGATAGSRQPSVETLDSPT. Over residues 12 to 24 the composition is skewed to gly residues; that stretch reads CEGGGGPNPGPAG. The segment covering 39 to 51 has biased composition (polar residues); sequence SRQPSVETLDSPT. Phosphoserine occurs at positions 43 and 49. Positions 90–161 constitute a GRAM domain; sequence NKLAQMEEAP…GVISRVEKIG (72 aa). Residues 226-601 enclose the Myotubularin phosphatase domain; sequence GWKVYDPVSE…SHLELWVNYY (376 aa). A 1,2-diacyl-sn-glycero-3-phospho-(1D-myo-inositol-3-phosphate)-binding residues include Asn-351, Asn-376, and Ile-377. Cys-438 serves as the catalytic Phosphocysteine intermediate. A 1,2-diacyl-sn-glycero-3-phospho-(1D-myo-inositol-3-phosphate) contacts are provided by Ser-439, Asp-440, Gly-441, Trp-442, Asp-443, Arg-444, and Arg-484. A phosphate-binding site is contributed by Ser-439. The phosphate site is built by Gly-441, Trp-442, Asp-443, and Arg-444. The segment at 608 to 665 is required for dimerization; it reads MRPQMPIHQNLKELLAVRAELQKRVEGLQREVATRAVSSSSERGSSPSHSATSVHTSV. The segment at 642-665 is disordered; it reads RAVSSSSERGSSPSHSATSVHTSV. Residues 645–657 show a composition bias toward low complexity; it reads SSSSERGSSPSHS.

This sequence belongs to the protein-tyrosine phosphatase family. Non-receptor class myotubularin subfamily. In terms of assembly, homodimer.

It is found in the cell membrane. Its subcellular location is the cytoplasm. The catalysed reaction is a 1,2-diacyl-sn-glycero-3-phospho-(1D-myo-inositol-3-phosphate) + H2O = a 1,2-diacyl-sn-glycero-3-phospho-(1D-myo-inositol) + phosphate. It catalyses the reaction 1,2-dioctanoyl-sn-glycero-3-phospho-(1-D-myo-inositol-3-phosphate) + H2O = 1,2-dioctanoyl-sn-glycero-3-phospho-(1D-myo-inositol) + phosphate. It carries out the reaction a 1,2-diacyl-sn-glycero-3-phospho-(1D-myo-inositol-3,5-bisphosphate) + H2O = a 1,2-diacyl-sn-glycero-3-phospho-(1D-myo-inositol-5-phosphate) + phosphate. In terms of biological role, lipid phosphatase that specifically dephosphorylates the D-3 position of phosphatidylinositol 3-phosphate, generating phosphatidylinositol. Could also dephosphorylate phosphatidylinositol 3,5-bisphosphate to produce phosphatidylinositol 5-phosphate. The sequence is that of Phosphatidylinositol-3-phosphate phosphatase MTMR1 from Homo sapiens (Human).